Here is a 355-residue protein sequence, read N- to C-terminus: MTKIENDRYLRALLRQPVDRTPVWLMRQAGRYLPEYRQLRAEAGDFMTLCQTPELACEVTLQPLRRFELDAAILFSDILTIPDAMGLGLTFGAGEGPKFAKTIQHQRDVDALPLPDPEGELRYVMDAVRTIKKALAQQVPLIGFSGSPWTLATYMVEGGSSKQFSRIKQMMYREPKLLHGLLSKLAASVTQYLNAQIAAGADAVMIFDTWGGVLSHQDYQEFSLQYMTAIVQGIHRQYDGRTIPVTLFTKGGGQWLEAIAASGCDAIGIDWTTDISAARARVGHKVALQGNMDPAVLQGDDAVVTAKVQEILQQYGNGSGHVFNLGHGITPDIEPARVKTFVDAVHRFSAPYHQS.

Substrate-binding positions include 27-31 (RQAGR), Asp-77, Tyr-154, Thr-209, and His-327.

This sequence belongs to the uroporphyrinogen decarboxylase family. As to quaternary structure, homodimer.

The protein localises to the cytoplasm. The enzyme catalyses uroporphyrinogen III + 4 H(+) = coproporphyrinogen III + 4 CO2. It functions in the pathway porphyrin-containing compound metabolism; protoporphyrin-IX biosynthesis; coproporphyrinogen-III from 5-aminolevulinate: step 4/4. Functionally, catalyzes the decarboxylation of four acetate groups of uroporphyrinogen-III to yield coproporphyrinogen-III. The polypeptide is Uroporphyrinogen decarboxylase (Tolumonas auensis (strain DSM 9187 / NBRC 110442 / TA 4)).